The following is a 361-amino-acid chain: Putative F-box protein At3g18340 (361 aa).

The F-box domain maps to 1–46 (MASGKLPWELEEEILCRLPPGSLVRLRSVCKHWNDLYNDKWFIKKS).

This is Putative F-box protein At3g18340 from Arabidopsis thaliana (Mouse-ear cress).